The following is a 155-amino-acid chain: Ribosomal RNA large subunit methyltransferase H (155 aa).

S-adenosyl-L-methionine-binding positions include Leu72, Gly103, and 122–127 (LGRMVW).

It belongs to the RNA methyltransferase RlmH family. As to quaternary structure, homodimer.

It is found in the cytoplasm. The enzyme catalyses pseudouridine(1915) in 23S rRNA + S-adenosyl-L-methionine = N(3)-methylpseudouridine(1915) in 23S rRNA + S-adenosyl-L-homocysteine + H(+). Specifically methylates the pseudouridine at position 1915 (m3Psi1915) in 23S rRNA. This chain is Ribosomal RNA large subunit methyltransferase H, found in Cereibacter sphaeroides (strain ATCC 17029 / ATH 2.4.9) (Rhodobacter sphaeroides).